The following is a 414-amino-acid chain: Serine hydroxymethyltransferase (414 aa).

(6S)-5,6,7,8-tetrahydrofolate-binding positions include leucine 118 and 122–124 (GHL). The residue at position 227 (lysine 227) is an N6-(pyridoxal phosphate)lysine. (6S)-5,6,7,8-tetrahydrofolate-binding positions include glutamate 240 and 350 to 352 (SPF).

It belongs to the SHMT family. Homodimer. Requires pyridoxal 5'-phosphate as cofactor.

The protein resides in the cytoplasm. It catalyses the reaction (6R)-5,10-methylene-5,6,7,8-tetrahydrofolate + glycine + H2O = (6S)-5,6,7,8-tetrahydrofolate + L-serine. The protein operates within one-carbon metabolism; tetrahydrofolate interconversion. Its pathway is amino-acid biosynthesis; glycine biosynthesis; glycine from L-serine: step 1/1. Its function is as follows. Catalyzes the reversible interconversion of serine and glycine with tetrahydrofolate (THF) serving as the one-carbon carrier. This reaction serves as the major source of one-carbon groups required for the biosynthesis of purines, thymidylate, methionine, and other important biomolecules. Also exhibits THF-independent aldolase activity toward beta-hydroxyamino acids, producing glycine and aldehydes, via a retro-aldol mechanism. In Bacillus cereus (strain ZK / E33L), this protein is Serine hydroxymethyltransferase.